The following is a 635-amino-acid chain: Threonine--tRNA ligase (635 aa).

A TGS domain is found at 1-61; the sequence is MIQITLPDAS…EKDSALSIIT (61 aa). Residues 242–533 form a catalytic region; it reads DHRKLGKELD…LIEEHAGALP (292 aa). 3 residues coordinate Zn(2+): C333, H384, and H510.

Belongs to the class-II aminoacyl-tRNA synthetase family. In terms of assembly, homodimer. The cofactor is Zn(2+).

The protein resides in the cytoplasm. It carries out the reaction tRNA(Thr) + L-threonine + ATP = L-threonyl-tRNA(Thr) + AMP + diphosphate + H(+). Its function is as follows. Catalyzes the attachment of threonine to tRNA(Thr) in a two-step reaction: L-threonine is first activated by ATP to form Thr-AMP and then transferred to the acceptor end of tRNA(Thr). Also edits incorrectly charged L-seryl-tRNA(Thr). The sequence is that of Threonine--tRNA ligase from Polaromonas sp. (strain JS666 / ATCC BAA-500).